The chain runs to 179 residues: Orotate phosphoribosyltransferase (179 aa).

Residues Arg94, Lys95, Lys98, His100, and 120–128 each bind 5-phospho-alpha-D-ribose 1-diphosphate; that span reads EDTSTTGNS. 2 residues coordinate orotate: Thr124 and Arg152.

This sequence belongs to the purine/pyrimidine phosphoribosyltransferase family. PyrE subfamily. Homodimer. The cofactor is Mg(2+).

The catalysed reaction is orotidine 5'-phosphate + diphosphate = orotate + 5-phospho-alpha-D-ribose 1-diphosphate. It participates in pyrimidine metabolism; UMP biosynthesis via de novo pathway; UMP from orotate: step 1/2. Its function is as follows. Catalyzes the transfer of a ribosyl phosphate group from 5-phosphoribose 1-diphosphate to orotate, leading to the formation of orotidine monophosphate (OMP). The chain is Orotate phosphoribosyltransferase from Mycobacterium bovis (strain ATCC BAA-935 / AF2122/97).